A 217-amino-acid polypeptide reads, in one-letter code: Translation initiation factor 6 (217 aa).

The protein belongs to the eIF-6 family.

In terms of biological role, binds to the 50S ribosomal subunit and prevents its association with the 30S ribosomal subunit to form the 70S initiation complex. This chain is Translation initiation factor 6, found in Picrophilus torridus (strain ATCC 700027 / DSM 9790 / JCM 10055 / NBRC 100828 / KAW 2/3).